The sequence spans 179 residues: MLSYFKELSLNRTAWLLLAFVAFALEASAIYFQYGMGLVPCVMCVYERLAIFGLLIAGLVGAISPRFFLTRWLALLLWGFSAFKGLALAIKHHDYQANPSPWNQCEFKPEFPQTMPFDQWFPSIFAPGPVNCSEKQWEMFGLGMPEWLILAFSIFALMFVIVLLSQFKRAKPQYRSVFR.

At 1-14 (MLSYFKELSLNRTA) the chain is on the cytoplasmic side. The chain crosses the membrane as a helical span at residues 15–31 (WLLLAFVAFALEASAIY). The Periplasmic portion of the chain corresponds to 32–49 (FQYGMGLVPCVMCVYERL). Cys41 and Cys44 are joined by a disulfide. A helical transmembrane segment spans residues 50-65 (AIFGLLIAGLVGAISP). The Cytoplasmic portion of the chain corresponds to 66–72 (RFFLTRW). Residues 73–90 (LALLLWGFSAFKGLALAI) form a helical membrane-spanning segment. The Periplasmic portion of the chain corresponds to 91–146 (KHHDYQANPSPWNQCEFKPEFPQTMPFDQWFPSIFAPGPVNCSEKQWEMFGLGMPE). Cys105 and Cys132 are oxidised to a cystine. The chain crosses the membrane as a helical span at residues 147–165 (WLILAFSIFALMFVIVLLS). At 166–179 (QFKRAKPQYRSVFR) the chain is on the cytoplasmic side.

It belongs to the DsbB family.

The protein resides in the cell inner membrane. Functionally, required for disulfide bond formation in some periplasmic proteins. Acts by oxidizing the DsbA protein. The polypeptide is Disulfide bond formation protein B (Actinobacillus pleuropneumoniae serotype 5b (strain L20)).